Consider the following 92-residue polypeptide: Large ribosomal subunit protein uL24c (92 aa).

This sequence belongs to the universal ribosomal protein uL24 family. Part of the 50S ribosomal subunit.

The protein localises to the plastid. It is found in the chloroplast. In terms of biological role, one of two assembly initiator proteins, it binds directly to the 5'-end of the 23S rRNA, where it nucleates assembly of the 50S subunit. The chain is Large ribosomal subunit protein uL24c (rpl24) from Gracilaria tenuistipitata var. liui (Red alga).